The sequence spans 236 residues: MLGLYLSSLFFAFFMAQVFATKYSITFTSDEYEEDETGQNEPGPLVFHLDKNSLPPALLNQMEFNPYLVLADLPEEPRAVDSQEHTDTVLASKSVIDFLLEDPLTIVEHKKFSQIESILHEIMEDSIQKKVGADEVFEEIPKPKIYAYEDILVTNMSIINNSEMPTSTATLTSTISYLSSTTSLALSTGVTSVEIFPTITPGNITTIGGYENSSSSLMPSMGILSFLFGLYLLLHP.

Positions 1–20 (MLGLYLSSLFFAFFMAQVFA) are cleaved as a signal peptide. N-linked (GlcNAc...) asparagine glycans are attached at residues asparagine 155, asparagine 160, asparagine 203, and asparagine 212. A lipid anchor (GPI-anchor amidated asparagine) is attached at asparagine 212. A propeptide spans 213 to 236 (SSSSLMPSMGILSFLFGLYLLLHP) (removed in mature form).

The GPI-anchor is attached to the protein in the endoplasmic reticulum and serves to target the protein to the cell surface. There, the glucosamine-inositol phospholipid moiety is cleaved off and the GPI-modified mannoprotein is covalently attached via its lipidless GPI glycan remnant to the 1,6-beta-glucan of the outer cell wall layer. Post-translationally, N-glycosylated.

It is found in the spore wall. It localises to the secreted. Its subcellular location is the cell wall. The protein localises to the membrane. The chain is Sorulation-regulated protein 2 from Saccharomyces cerevisiae (strain ATCC 204508 / S288c) (Baker's yeast).